Reading from the N-terminus, the 64-residue chain is Large ribosomal subunit protein bL35 (64 aa).

The segment at 1 to 43 (MPKMKSKKSLAKRVIAKKNGTLKRGKAYRSHRATGKTTKQKRH) is disordered.

Belongs to the bacterial ribosomal protein bL35 family.

The protein is Large ribosomal subunit protein bL35 of Mesoplasma florum (strain ATCC 33453 / NBRC 100688 / NCTC 11704 / L1) (Acholeplasma florum).